We begin with the raw amino-acid sequence, 346 residues long: tRNA N6-adenosine threonylcarbamoyltransferase (346 aa).

Fe cation is bound by residues histidine 111 and histidine 115. Substrate contacts are provided by residues 134 to 138 (LVSGG), aspartate 167, glycine 180, and asparagine 279. Residue aspartate 307 participates in Fe cation binding.

The protein belongs to the KAE1 / TsaD family. Fe(2+) is required as a cofactor.

The protein localises to the cytoplasm. It carries out the reaction L-threonylcarbamoyladenylate + adenosine(37) in tRNA = N(6)-L-threonylcarbamoyladenosine(37) in tRNA + AMP + H(+). Functionally, required for the formation of a threonylcarbamoyl group on adenosine at position 37 (t(6)A37) in tRNAs that read codons beginning with adenine. Is involved in the transfer of the threonylcarbamoyl moiety of threonylcarbamoyl-AMP (TC-AMP) to the N6 group of A37, together with TsaE and TsaB. TsaD likely plays a direct catalytic role in this reaction. The polypeptide is tRNA N6-adenosine threonylcarbamoyltransferase (Burkholderia cenocepacia (strain HI2424)).